A 230-amino-acid chain; its full sequence is Cutinase 1 (230 aa).

A signal peptide spans 1-16 (MKFFALTTLLAATASA). Residues 17 to 31 (LPTSNPAQELEARQL) constitute a propeptide that is removed on maturation. Gly32 is subject to N-D-glucuronoyl glycine. Cys47 and Cys125 form a disulfide bridge. Ser136 (nucleophile) is an active-site residue. A disulfide bridge links Cys187 with Cys194. The active site involves Asp191. His204 (proton donor/acceptor) is an active-site residue.

The protein belongs to the cutinase family. Post-translationally, the 2 disulfide bonds play a critical role in holding the catalytic residues in juxta-position; reduction of the disulfide bridges results in the complete inactivation of the enzyme. In terms of processing, O-glycosylated; contains one mole each of mannose, arabinose, N-acetylglucosamine, and glucuronic acid.

It is found in the secreted. The catalysed reaction is cutin + H2O = cutin monomers.. Inhibited by n-undecyl phosphonate (C11Y4). Inhibited by paraoxon. In terms of biological role, catalyzes the hydrolysis of complex carboxylic polyesters found in the cell wall of plants. Degrades cutin, a macromolecule that forms the structure of the plant cuticle. Allows pathogenic fungi to penetrate through the cuticular barrier into the host plant during the initial stage of fungal infection. The sequence is that of Cutinase 1 (CUT1) from Fusarium vanettenii (Neocosmospora pisi).